The chain runs to 818 residues: Histone H2A deubiquitinase MYSM1 (818 aa).

The SANT domain maps to 107 to 158 (SSPVKWTKEEKNLFEQGLATFGRRWTSIARLIGSRSVLQVKNYARHYFKNKC). The SWIRM domain maps to 344 to 442 (IKPPDQELEI…FGCEQAIYNR (99 aa)). The MPN domain occupies 548–680 (VKVSCEAMLV…PHPQSQVACL (133 aa)). Positions 627, 629, and 640 each coordinate Zn(2+). Positions 627 to 640 (HSHPAFDPNPSIRD) match the JAMM motif motif. Residues 745–749 (LQKLL) carry the LXXLL motif motif.

It belongs to the peptidase M67A family. MYSM1 subfamily.

Its subcellular location is the nucleus. Its function is as follows. Metalloprotease that specifically deubiquitinates monoubiquitinated histone H2A, a specific tag for epigenetic transcriptional repression, thereby acting as a coactivator. Preferentially deubiquitinates monoubiquitinated H2A in hyperacetylated nucleosomes. Deubiquitination of histone H2A leads to facilitate the phosphorylation and dissociation of histone H1 from the nucleosome. Acts as a coactivator by participating in the initiation and elongation steps of androgen receptor (AR)-induced gene activation. The chain is Histone H2A deubiquitinase MYSM1 (mysm1) from Xenopus laevis (African clawed frog).